The chain runs to 423 residues: Glucose-1-phosphate adenylyltransferase (423 aa).

Residues Y107, G172, 187–188 (EK), and S205 contribute to the alpha-D-glucose 1-phosphate site.

This sequence belongs to the bacterial/plant glucose-1-phosphate adenylyltransferase family. As to quaternary structure, homotetramer.

It catalyses the reaction alpha-D-glucose 1-phosphate + ATP + H(+) = ADP-alpha-D-glucose + diphosphate. It functions in the pathway glycan biosynthesis; glycogen biosynthesis. Functionally, involved in the biosynthesis of ADP-glucose, a building block required for the elongation reactions to produce glycogen. Catalyzes the reaction between ATP and alpha-D-glucose 1-phosphate (G1P) to produce pyrophosphate and ADP-Glc. This Cereibacter sphaeroides (strain ATCC 17029 / ATH 2.4.9) (Rhodobacter sphaeroides) protein is Glucose-1-phosphate adenylyltransferase.